The primary structure comprises 191 residues: MTADNSVPSRLRNILVIAAALVLTILVVLGSRQPSAAASLASLAEQATPYEVAIANDRPMLLEFYADWCTSCQAMAGRIAALKQDYSDRLDFVMLNIDNDKWLPEVLDYNVDGIPQFVYLNGQGQPQGISIGELPRSVLAANLDALVEAQPLPYTNARGNLSEFSADLQPSRSSQTDPRSHSGQVQDGVLD.

A helical transmembrane segment spans residues 14-30 (ILVIAAALVLTILVVLG). Residues 27 to 148 (VVLGSRQPSA…LAANLDALVE (122 aa)) enclose the Thioredoxin domain. A disulfide bridge connects residues Cys-69 and Cys-72. A compositionally biased stretch (polar residues) spans 165 to 185 (SADLQPSRSSQTDPRSHSGQV). The disordered stretch occupies residues 165–191 (SADLQPSRSSQTDPRSHSGQVQDGVLD).

This sequence belongs to the thioredoxin family.

It is found in the cell membrane. Required for disulfide bond formation in some proteins. Acts by transferring its disulfide bond to other proteins and is reduced in the process. The polypeptide is Thiol:disulfide interchange protein TxlA (txlA) (Synechococcus elongatus (strain ATCC 33912 / PCC 7942 / FACHB-805) (Anacystis nidulans R2)).